The following is a 640-amino-acid chain: MEAALLRPPPLAARGGVSIAIAFSVSRLPSAAAAAAAGKPRKLAPPACRCRATPQWQLDFLGAEADTEADGGDDDDDLDLDLSLPAETNDWCVRARRSALRSIEARGLSPSLQRMVASPKKKNKKKKSKKTNLKQKKAAEPKPPRDTDDDEDDEEEADDDLEALLAGGGELDDLELRVAQFADGMFDEKRQRNREQFIQTLSAFSPAAPSNRSQEVSLNRSIVEARTADEVLALTAEVVAAVAKGLSPSPLTPLNIATALHRIAKNMEAVSMLQTHRLGFARSRDMSMLVGLAMVALPECSPQGVSNISWALSKIGGDLLYLPEMDRIAQVAITKVDSFNAQNVANVAGSFASMRHSAPDLISALTRRAAELVYTFKEQELAQFLWGCASLNECPYPLLDALDTACRDAPSFDCHLHDTVPGMWQSSDKEASSLKNSSNAYALNFTRDQIGNIAWSYAVLGQMDRPFFSGIWKTLSQFEERKISDQYREDMMFVSQVYLANQSLKLEYPHLDMCLRGDLEENLTKTGRSKRFNQKMTSSFQKEVGRLLCSTGHEWNKEYTIDGYTVDAVLVDEKLAFEIDGPSHFSRNLGTPLGHTAFKRRYIAAAGWNLVSLSHQEWENLEGEFEQLEYLRRILGFDAE.

The transit peptide at 1–32 directs the protein to the chloroplast; sequence MEAALLRPPPLAARGGVSIAIAFSVSRLPSAA. A disordered region spans residues 111–158; sequence SLQRMVASPKKKNKKKKSKKTNLKQKKAAEPKPPRDTDDDEDDEEEAD. The segment covering 119–136 has biased composition (basic residues); the sequence is PKKKNKKKKSKKTNLKQK. Basic and acidic residues predominate over residues 137–146; the sequence is KAAEPKPPRD. The segment covering 147-158 has biased composition (acidic residues); sequence TDDDEDDEEEAD. Residues 575-633 form the RAP domain; it reads LAFEIDGPSHFSRNLGTPLGHTAFKRRYIAAAGWNLVSLSHQEWENLEGEFEQLEYLRR.

As to expression, expressed in roots, leaf sheaths, veins of leaf blade, mature leaves, endodermis of culm, panicles and anthers.

The protein resides in the plastid. It is found in the chloroplast. Its function is as follows. Probable RNA-binding protein that plays an essential role in chloroplast development. Regulates the ribosomal proteins homeostasis and ribosomal RNA development in chloroplasts. Involved the regulation of 16S rRNA and required for the expression of chloroplast-associated photosynthetic genes. This Oryza sativa subsp. japonica (Rice) protein is RAP domain-containing protein, chloroplastic.